A 293-amino-acid chain; its full sequence is MIETTDSLRDCLAPAKLNLFLHITGRRPDGYHTLQTVFQLLDWGDTLHFTRRDDGLITRSTEIADVPPEHDLTVRAATLLKAHTGSPEGVDIEIDKRLPMGAGLGGGSSDAATTLLALNRLWKLNLPRLELQALALKLGADVPFFVFGKNAFAQGVGEALDVVQLPPRHFLVVTPRVHVPTAAIFSEKALTRDSKPLTITDFPAELSCNTEWPESFGRNDMQQVVVGKYAEVAQVLRWFENVAPARMSGSGASVFAAFRSKAEAEAAQAKLPAEWNSAVTASLDQHPLFTFAS.

The active site involves lysine 16. 99–109 contributes to the ATP binding site; sequence PMGAGLGGGSS. Aspartate 141 is an active-site residue.

This sequence belongs to the GHMP kinase family. IspE subfamily.

It carries out the reaction 4-CDP-2-C-methyl-D-erythritol + ATP = 4-CDP-2-C-methyl-D-erythritol 2-phosphate + ADP + H(+). It participates in isoprenoid biosynthesis; isopentenyl diphosphate biosynthesis via DXP pathway; isopentenyl diphosphate from 1-deoxy-D-xylulose 5-phosphate: step 3/6. Functionally, catalyzes the phosphorylation of the position 2 hydroxy group of 4-diphosphocytidyl-2C-methyl-D-erythritol. The polypeptide is 4-diphosphocytidyl-2-C-methyl-D-erythritol kinase (Paraburkholderia phytofirmans (strain DSM 17436 / LMG 22146 / PsJN) (Burkholderia phytofirmans)).